Reading from the N-terminus, the 426-residue chain is DNA polymerase processivity factor component OPG148 (426 aa).

The protein belongs to the orthopoxvirus OPG148 family. Interacts with the DNA polymerase catalytic subunit OPG071. Interacts with UDG/OPG116. Component of the uracil-DNA glycosylase(UDG)-OPG148-polymerase complex; OPG148 and UDG form a heterodimeric processivity factor that associates with OPG071 to form the processive polymerase holoenzyme. Interacts with OPG117.

Its function is as follows. Plays an essential role in viral DNA replication by acting as the polymerase processivity factor together with protein OPG116. Serves as a bridge which links the DNA polymerase OPG071 and the uracil DNA glycosylase. In Cynomys gunnisoni (Gunnison's prairie dog), this protein is DNA polymerase processivity factor component OPG148 (OPG148).